Reading from the N-terminus, the 548-residue chain is T-complex protein 1 subunit theta (548 aa).

At alanine 2 the chain carries N-acetylalanine. Residues tyrosine 47 and glycine 48 each contribute to the ADP site. Residue aspartate 99 participates in Mg(2+) binding. ADP is bound by residues glycine 100, threonine 101, asparagine 102, phenylalanine 103, methionine 169, serine 170, lysine 171, glycine 412, and aspartate 499. Glycine 100, threonine 101, and asparagine 102 together coordinate ATP. ATP is bound by residues serine 170, lysine 171, glycine 412, aspartate 499, and lysine 504. Position 505 is a phosphotyrosine (tyrosine 505). Residues 529–548 (PAGGPKPPSGKKDWDEDQND) form a disordered region.

In terms of assembly, component of the chaperonin-containing T-complex (TRiC), a hexadecamer composed of two identical back-to-back stacked rings enclosing a protein folding chamber. Each ring is made up of eight different subunits: TCP1/CCT1, CCT2, CCT3, CCT4, CCT5, CCT6A/CCT6, CCT7, CCT8.

It localises to the cytoplasm. Its subcellular location is the cytoskeleton. The protein resides in the microtubule organizing center. The protein localises to the centrosome. It is found in the cilium basal body. It carries out the reaction ATP + H2O = ADP + phosphate + H(+). In terms of biological role, component of the chaperonin-containing T-complex (TRiC), a molecular chaperone complex that assists the folding of actin, tubulin and other proteins upon ATP hydrolysis. This Gallus gallus (Chicken) protein is T-complex protein 1 subunit theta.